The following is a 244-amino-acid chain: 5-oxoprolinase subunit A (244 aa).

This sequence belongs to the LamB/PxpA family. As to quaternary structure, forms a complex composed of PxpA, PxpB and PxpC.

The enzyme catalyses 5-oxo-L-proline + ATP + 2 H2O = L-glutamate + ADP + phosphate + H(+). In terms of biological role, catalyzes the cleavage of 5-oxoproline to form L-glutamate coupled to the hydrolysis of ATP to ADP and inorganic phosphate. The polypeptide is 5-oxoprolinase subunit A (Escherichia coli O6:K15:H31 (strain 536 / UPEC)).